Here is a 547-residue protein sequence, read N- to C-terminus: Chaperonin GroEL (547 aa).

Residues 30 to 33, Lys51, 87 to 91, Gly415, 480 to 482, and Asp496 contribute to the ATP site; these read TLGP, DGTTT, and NAA.

Belongs to the chaperonin (HSP60) family. As to quaternary structure, forms a cylinder of 14 subunits composed of two heptameric rings stacked back-to-back. Interacts with the co-chaperonin GroES.

It is found in the cytoplasm. The catalysed reaction is ATP + H2O + a folded polypeptide = ADP + phosphate + an unfolded polypeptide.. Its function is as follows. Together with its co-chaperonin GroES, plays an essential role in assisting protein folding. The GroEL-GroES system forms a nano-cage that allows encapsulation of the non-native substrate proteins and provides a physical environment optimized to promote and accelerate protein folding. This Glaesserella parasuis serovar 5 (strain SH0165) (Haemophilus parasuis) protein is Chaperonin GroEL.